Consider the following 48-residue polypeptide: Large ribosomal subunit protein bL33A (48 aa).

This sequence belongs to the bacterial ribosomal protein bL33 family.

The chain is Large ribosomal subunit protein bL33A from Streptococcus pyogenes serotype M28 (strain MGAS6180).